We begin with the raw amino-acid sequence, 101 residues long: Putative septation protein SpoVG (101 aa).

Residues 82 to 101 (ELKKGGAAPARATGTDPHED) are disordered.

Belongs to the SpoVG family.

Could be involved in septation. The chain is Putative septation protein SpoVG from Anaeromyxobacter dehalogenans (strain 2CP-1 / ATCC BAA-258).